The chain runs to 328 residues: Tetraacyldisaccharide 4'-kinase (328 aa).

55–62 (TAGGNGKT) is an ATP binding site.

It belongs to the LpxK family.

It catalyses the reaction a lipid A disaccharide + ATP = a lipid IVA + ADP + H(+). The protein operates within glycolipid biosynthesis; lipid IV(A) biosynthesis; lipid IV(A) from (3R)-3-hydroxytetradecanoyl-[acyl-carrier-protein] and UDP-N-acetyl-alpha-D-glucosamine: step 6/6. Transfers the gamma-phosphate of ATP to the 4'-position of a tetraacyldisaccharide 1-phosphate intermediate (termed DS-1-P) to form tetraacyldisaccharide 1,4'-bis-phosphate (lipid IVA). The protein is Tetraacyldisaccharide 4'-kinase of Escherichia coli O127:H6 (strain E2348/69 / EPEC).